The following is a 342-amino-acid chain: Holliday junction branch migration complex subunit RuvB (342 aa).

A large ATPase domain (RuvB-L) region spans residues 1-185; the sequence is MRKDYLNSNK…FGINTRLAYY (185 aa). Residues Leu24, Arg25, Gly66, Lys69, Thr70, Thr71, 132–134, Arg175, Tyr185, and Arg222 contribute to the ATP site; that span reads EDF. Thr70 is a binding site for Mg(2+). A small ATPAse domain (RuvB-S) region spans residues 186–256; sequence DVTLLTQIVK…IAQMALKALD (71 aa). Residues 259–342 are head domain (RuvB-H); sequence EDGLDEMDNR…PPQRAGTLFE (84 aa). Positions 314 and 319 each coordinate DNA.

Belongs to the RuvB family. In terms of assembly, homohexamer. Forms an RuvA(8)-RuvB(12)-Holliday junction (HJ) complex. HJ DNA is sandwiched between 2 RuvA tetramers; dsDNA enters through RuvA and exits via RuvB. An RuvB hexamer assembles on each DNA strand where it exits the tetramer. Each RuvB hexamer is contacted by two RuvA subunits (via domain III) on 2 adjacent RuvB subunits; this complex drives branch migration. In the full resolvosome a probable DNA-RuvA(4)-RuvB(12)-RuvC(2) complex forms which resolves the HJ.

Its subcellular location is the cytoplasm. The catalysed reaction is ATP + H2O = ADP + phosphate + H(+). In terms of biological role, the RuvA-RuvB-RuvC complex processes Holliday junction (HJ) DNA during genetic recombination and DNA repair, while the RuvA-RuvB complex plays an important role in the rescue of blocked DNA replication forks via replication fork reversal (RFR). RuvA specifically binds to HJ cruciform DNA, conferring on it an open structure. The RuvB hexamer acts as an ATP-dependent pump, pulling dsDNA into and through the RuvAB complex. RuvB forms 2 homohexamers on either side of HJ DNA bound by 1 or 2 RuvA tetramers; 4 subunits per hexamer contact DNA at a time. Coordinated motions by a converter formed by DNA-disengaged RuvB subunits stimulates ATP hydrolysis and nucleotide exchange. Immobilization of the converter enables RuvB to convert the ATP-contained energy into a lever motion, pulling 2 nucleotides of DNA out of the RuvA tetramer per ATP hydrolyzed, thus driving DNA branch migration. The RuvB motors rotate together with the DNA substrate, which together with the progressing nucleotide cycle form the mechanistic basis for DNA recombination by continuous HJ branch migration. Branch migration allows RuvC to scan DNA until it finds its consensus sequence, where it cleaves and resolves cruciform DNA. This chain is Holliday junction branch migration complex subunit RuvB, found in Amoebophilus asiaticus (strain 5a2).